The sequence spans 164 residues: SVVLDTKGQPVRNAADAYYLEPVARGDGGLALAKVGNEAEPKAVVLDPNHRPGLTVRFETPLRINIIKESFFLNIKFVPSSSESEVWEVRQQYPEGLAVKVTDTKSLVGPFRVEKEGEGYKIVYYPDRGETGLDIGLVHRNEKYYLAVKDGEPFVFKIRKATDE.

Belongs to the leguminous Kunitz-type inhibitor family.

Functionally, inhibitor of trypsin and human plasma kallikrein with a Ki of 2.9 nM and 14.0 nM, respectively. Does not inhibit chymotrypsin, porcine pancreatic elastas, human neutrophil elastase, coagulation factor Xa, human thrombin, porcine pancreatic kallikrein or plasmin. In Bauhinia rufa (Orchid tree), this protein is Kunitz-type trypsin inhibitor BrTI.